Reading from the N-terminus, the 78-residue chain is U-scoloptoxin(04)-Er1b (78 aa).

The N-terminal stretch at 1-24 (MTRHLIFAAVLLVCLFVCWNAVGA) is a signal peptide. The propeptide occupies 25-28 (QDAR).

This sequence belongs to the scoloptoxin-04 family. Post-translationally, contains 2 disulfide bonds. As to expression, expressed by the venom gland.

It localises to the secreted. The chain is U-scoloptoxin(04)-Er1b from Ethmostigmus rubripes (Giant centipede).